The chain runs to 492 residues: Homoserine O-acetyltransferase (492 aa).

Residues 47 to 352 (NAILVFHALS…KSIYGHDAFL (306 aa)) form the AB hydrolase-1 domain. Ser-152 functions as the Nucleophile in the catalytic mechanism. Arg-221 lines the substrate pocket. Active-site residues include Asp-315 and His-348. Asp-349 contacts substrate. CBS domains are found at residues 375 to 431 (MTKN…ENSI) and 440 to 492 (MTKN…TITI).

Belongs to the AB hydrolase superfamily. MetX family. Homodimer.

The protein localises to the cytoplasm. It catalyses the reaction L-homoserine + acetyl-CoA = O-acetyl-L-homoserine + CoA. It participates in amino-acid biosynthesis; L-methionine biosynthesis via de novo pathway; O-acetyl-L-homoserine from L-homoserine: step 1/1. Its function is as follows. Transfers an acetyl group from acetyl-CoA to L-homoserine, forming acetyl-L-homoserine. The sequence is that of Homoserine O-acetyltransferase from Methanococcus vannielii (strain ATCC 35089 / DSM 1224 / JCM 13029 / OCM 148 / SB).